A 73-amino-acid chain; its full sequence is Translational regulator CsrA (73 aa).

The protein belongs to the CsrA/RsmA family. As to quaternary structure, homodimer; the beta-strands of each monomer intercalate to form a hydrophobic core, while the alpha-helices form wings that extend away from the core.

It is found in the cytoplasm. Functionally, a translational regulator that binds mRNA to regulate translation initiation and/or mRNA stability. Usually binds in the 5'-UTR at or near the Shine-Dalgarno sequence preventing ribosome-binding, thus repressing translation. Its main target seems to be the major flagellin gene, while its function is anatagonized by FliW. This chain is Translational regulator CsrA, found in Clostridium kluyveri (strain NBRC 12016).